A 682-amino-acid polypeptide reads, in one-letter code: Methionine--tRNA ligase (682 aa).

Residues 12 to 22 (PYANGAIHLGH) carry the 'HIGH' region motif. 4 residues coordinate Zn(2+): Cys-143, Cys-146, Cys-156, and Cys-159. Positions 328 to 332 (KMSKS) match the 'KMSKS' region motif. Lys-331 contributes to the ATP binding site. In terms of domain architecture, tRNA-binding spans 580 to 682 (DFAKLDLRVA…EGIRPGMQVK (103 aa)).

It belongs to the class-I aminoacyl-tRNA synthetase family. MetG type 1 subfamily. In terms of assembly, homodimer. Requires Zn(2+) as cofactor.

The protein localises to the cytoplasm. It catalyses the reaction tRNA(Met) + L-methionine + ATP = L-methionyl-tRNA(Met) + AMP + diphosphate. Is required not only for elongation of protein synthesis but also for the initiation of all mRNA translation through initiator tRNA(fMet) aminoacylation. This chain is Methionine--tRNA ligase, found in Actinobacillus pleuropneumoniae serotype 7 (strain AP76).